The chain runs to 229 residues: 2-phytyl-1,4-naphtoquinone methyltransferase (229 aa).

It belongs to the class I-like SAM-binding methyltransferase superfamily. MenG/UbiE family.

It carries out the reaction demethylphylloquinol + S-adenosyl-L-methionine = phylloquinol + S-adenosyl-L-homocysteine + H(+). It participates in cofactor biosynthesis; phylloquinone biosynthesis. Functionally, methyltransferase required for the conversion of 2-phytyl-1,4-beta-naphthoquinol to phylloquinol. The sequence is that of 2-phytyl-1,4-naphtoquinone methyltransferase from Trichormus variabilis (strain ATCC 29413 / PCC 7937) (Anabaena variabilis).